A 429-amino-acid polypeptide reads, in one-letter code: Adenylosuccinate synthetase (429 aa).

GTP contacts are provided by residues 12–18 (GDEGKGK) and 40–42 (GHT). The Proton acceptor role is filled by Asp-13. Residues Asp-13 and Gly-40 each contribute to the Mg(2+) site. Residues 13–16 (DEGK), 38–41 (NAGH), Thr-128, Arg-142, Gln-223, Thr-238, and Arg-302 contribute to the IMP site. His-41 (proton donor) is an active-site residue. 298-304 (TTTGRPR) provides a ligand contact to substrate. Residues Arg-304, 330-332 (SID), and 412-414 (SVG) each bind GTP.

It belongs to the adenylosuccinate synthetase family. As to quaternary structure, homodimer. Requires Mg(2+) as cofactor.

The protein resides in the cytoplasm. The enzyme catalyses IMP + L-aspartate + GTP = N(6)-(1,2-dicarboxyethyl)-AMP + GDP + phosphate + 2 H(+). The protein operates within purine metabolism; AMP biosynthesis via de novo pathway; AMP from IMP: step 1/2. In terms of biological role, plays an important role in the de novo pathway of purine nucleotide biosynthesis. Catalyzes the first committed step in the biosynthesis of AMP from IMP. The polypeptide is Adenylosuccinate synthetase (Lysinibacillus sphaericus (strain C3-41)).